A 127-amino-acid polypeptide reads, in one-letter code: Large ribosomal subunit protein eL8 (127 aa).

It belongs to the eukaryotic ribosomal protein eL8 family. In terms of assembly, part of the 50S ribosomal subunit. Probably part of the RNase P complex.

The protein localises to the cytoplasm. Functionally, multifunctional RNA-binding protein that recognizes the K-turn motif in ribosomal RNA, the RNA component of RNase P, box H/ACA, box C/D and box C'/D' sRNAs. This Aeropyrum pernix (strain ATCC 700893 / DSM 11879 / JCM 9820 / NBRC 100138 / K1) protein is Large ribosomal subunit protein eL8.